The following is a 205-amino-acid chain: dITP/XTP pyrophosphatase (205 aa).

16–21 provides a ligand contact to substrate; the sequence is TGNPGK. Residues glutamate 48 and aspartate 77 each contribute to the Mg(2+) site. Aspartate 77 acts as the Proton acceptor in catalysis. Residues serine 78, 162–165, lysine 185, and 190–191 contribute to the substrate site; these read FGYD and HR.

Belongs to the HAM1 NTPase family. In terms of assembly, homodimer. Requires Mg(2+) as cofactor.

It carries out the reaction XTP + H2O = XMP + diphosphate + H(+). It catalyses the reaction dITP + H2O = dIMP + diphosphate + H(+). The enzyme catalyses ITP + H2O = IMP + diphosphate + H(+). In terms of biological role, pyrophosphatase that catalyzes the hydrolysis of nucleoside triphosphates to their monophosphate derivatives, with a high preference for the non-canonical purine nucleotides XTP (xanthosine triphosphate), dITP (deoxyinosine triphosphate) and ITP. Seems to function as a house-cleaning enzyme that removes non-canonical purine nucleotides from the nucleotide pool, thus preventing their incorporation into DNA/RNA and avoiding chromosomal lesions. This chain is dITP/XTP pyrophosphatase, found in Erwinia tasmaniensis (strain DSM 17950 / CFBP 7177 / CIP 109463 / NCPPB 4357 / Et1/99).